Here is a 396-residue protein sequence, read N- to C-terminus: Ornithine aminotransferase 2 (396 aa).

Lysine 255 bears the N6-(pyridoxal phosphate)lysine mark.

It belongs to the class-III pyridoxal-phosphate-dependent aminotransferase family. OAT subfamily. Pyridoxal 5'-phosphate is required as a cofactor.

The protein resides in the cytoplasm. It carries out the reaction a 2-oxocarboxylate + L-ornithine = L-glutamate 5-semialdehyde + an L-alpha-amino acid. It participates in amino-acid biosynthesis; L-proline biosynthesis; L-glutamate 5-semialdehyde from L-ornithine: step 1/1. Catalyzes the interconversion of ornithine to glutamate semialdehyde. The protein is Ornithine aminotransferase 2 of Staphylococcus aureus (strain MRSA252).